The following is a 388-amino-acid chain: Cdc42 effector protein 1 (388 aa).

A disordered region spans residues 1 to 28 (MPGPQGGTGAPSMSLGKLSPVGWVPSSH). Residues Ser-19 and Ser-27 each carry the phosphoserine modification. The residue at position 34 (Thr-34) is a Phosphothreonine. Positions 38–52 (ISPPLGDFRHTMHVG) constitute a CRIB domain. A Phosphoserine modification is found at Ser-39. At Arg-53 the chain carries Omega-N-methylarginine. 6 positions are modified to phosphoserine: Ser-65, Ser-77, Ser-101, Ser-113, Ser-121, and Ser-139. Residues 165-206 (RLPRVEKHSSRDRDHDRDPDHSQDREQSSSPSEPNPNPELRR) form a disordered region. The segment covering 167–191 (PRVEKHSSRDRDHDRDPDHSQDREQ) has biased composition (basic and acidic residues). Phosphoserine occurs at positions 193, 207, 209, and 212. Tandem repeats lie at residues 237 to 243 (PAANPPA) and 250 to 256 (PTAKPPA). The tract at residues 237-257 (PAANPPAPAANPAPTAKPPAD) is disordered. The tract at residues 237–270 (PAANPPAPAANPAPTAKPPADAVTTLDTVTSLPA) is 2 X 7 AA tandem repeats of [PT]-[AT]-A-[ENT]-[PT]-[PTS]-[AG]. Pro residues predominate over residues 239-253 (ANPPAPAANPAPTAK). A phosphoserine mark is found at Ser-298, Ser-318, Ser-347, and Ser-350.

The protein belongs to the BORG/CEP family. Interacts with RHOQ and CDC42, in a GTP-dependent manner.

It localises to the endomembrane system. Its subcellular location is the cytoplasm. The protein resides in the cytoskeleton. Its function is as follows. Probably involved in the organization of the actin cytoskeleton. Induced membrane extensions in fibroblasts. This is Cdc42 effector protein 1 from Rattus norvegicus (Rat).